A 381-amino-acid polypeptide reads, in one-letter code: 3-hydroxyisobutyryl-CoA hydrolase, mitochondrial (381 aa).

The N-terminal 25 residues, 1–25 (MDRLLTISNHIGKNIRQFSTSTEEV), are a transit peptide targeting the mitochondrion. The substrate site is built by E116, G141, E164, and D172.

The protein belongs to the enoyl-CoA hydratase/isomerase family.

Its subcellular location is the mitochondrion. It catalyses the reaction 3-hydroxy-2-methylpropanoyl-CoA + H2O = 3-hydroxy-2-methylpropanoate + CoA + H(+). The protein operates within amino-acid degradation; L-valine degradation. Its function is as follows. Hydrolyzes 3-hydroxyisobutyryl-CoA (HIBYL-CoA), a saline catabolite. This is 3-hydroxyisobutyryl-CoA hydrolase, mitochondrial (hibch) from Dictyostelium discoideum (Social amoeba).